The primary structure comprises 323 residues: MSSKPKSLEIIGAPFSKGQPRGGVEKGPAALRKAGLLEKLKETEYDVRDHGDLAFVDVPNDSSFQIVKNPRSVGKANEELAGVVAEVQKNGRVSVVLGGDHSLAVGSISGHARVHPDLCVIWVDAHTDINTPLTTSSGNLHGQPVSFLLKELKGKFPDVPGFSWVTPCISAKDIVYIGLRDVDPGEHYIIKTLGIKYFSMTEVDKLGIGKVMEETFSYLLGRKKRPIHLSFDVDGLDPAFTPATGTPVLGGLSYREGLYITEEIYKTGLLSGLDIMEVNPTLGKTAEEVKSTVNTAVALTLACFGTQREGNHKPGTDYLKPPK.

The segment at 1–27 (MSSKPKSLEIIGAPFSKGQPRGGVEKG) is disordered. The residue at position 7 (serine 7) is a Phosphoserine. Residue lysine 17 is modified to N6-succinyllysine. Phosphoserine is present on residues serine 62 and serine 72. Lysine 75 is modified (N6-succinyllysine). Residues histidine 101, aspartate 124, histidine 126, and aspartate 128 each coordinate Mn(2+). Residues 126-130 (HTDIN) and 137-139 (SGN) each bind substrate. A Phosphoserine modification is found at serine 163. Aspartate 183 is a binding site for substrate. Position 217 is a phosphoserine (serine 217). Mn(2+)-binding residues include aspartate 232 and aspartate 234. Substrate-binding residues include threonine 246 and glutamate 277. Threonine 281 carries the post-translational modification Phosphothreonine.

The protein belongs to the arginase family. In terms of assembly, homotrimer. Interacts with CMTM6. Mn(2+) is required as a cofactor. In terms of tissue distribution, expressed in macrophages. Expressed in precursor and mature group 2 innate lymphoid cells (ILC2s). Expressed in lung tumor-associated myeloid cells. Expressed in lung tumor-infiltrating dendritic cells.

The protein resides in the cytoplasm. The protein localises to the cytoplasmic granule. It carries out the reaction L-arginine + H2O = urea + L-ornithine. Its pathway is nitrogen metabolism; urea cycle; L-ornithine and urea from L-arginine: step 1/1. Its function is as follows. Key element of the urea cycle converting L-arginine to urea and L-ornithine, which is further metabolized into metabolites proline and polyamides that drive collagen synthesis and bioenergetic pathways critical for cell proliferation, respectively; the urea cycle takes place primarily in the liver and, to a lesser extent, in the kidneys. Functions in L-arginine homeostasis in nonhepatic tissues characterized by the competition between nitric oxide synthase (NOS) and arginase for the available intracellular substrate arginine. Arginine metabolism is a critical regulator of innate and adaptive immune responses. Involved in an antimicrobial effector pathway in polymorphonuclear granulocytes (PMN). Upon PMN cell death is liberated from the phagolysosome and depletes arginine in the microenvironment leading to suppressed T cell and natural killer (NK) cell proliferation and cytokine secretion. In group 2 innate lymphoid cells (ILC2s) promotes acute type 2 inflammation in the lung and is involved in optimal ILC2 proliferation but not survival. Plays a role in the immune response of alternatively activated or M2 macrophages in processes such as wound healing and tissue regeneration, immune defense against multicellular pathogens and parasites, and immune suppression and allergic inflammation; the regulatory outcome seems to be organ specific. In tumor-infiltrating dendritic cells (DCs) and myeloid-derived suppressor cells (MDSCs) plays a role in suppression of T cell-mediated antitumor immunity. The protein is Arginase-1 (Arg1) of Mus musculus (Mouse).